We begin with the raw amino-acid sequence, 446 residues long: Phosphoglucosamine mutase (446 aa).

Ser103 (phosphoserine intermediate) is an active-site residue. The Mg(2+) site is built by Ser103, Asp242, Asp244, and Asp246. Ser103 carries the phosphoserine modification.

The protein belongs to the phosphohexose mutase family. Mg(2+) serves as cofactor. In terms of processing, activated by phosphorylation.

It carries out the reaction alpha-D-glucosamine 1-phosphate = D-glucosamine 6-phosphate. Functionally, catalyzes the conversion of glucosamine-6-phosphate to glucosamine-1-phosphate. The polypeptide is Phosphoglucosamine mutase (Vibrio cholerae serotype O1 (strain ATCC 39315 / El Tor Inaba N16961)).